Consider the following 108-residue polypeptide: Heme-degrading monooxygenase HmoA (108 aa).

Residues 2–95 (FVQLRKMTVK…DYLISTEVSM (94 aa)) enclose the ABM domain. Histidine 76 serves as a coordination point for heme.

It belongs to the antibiotic biosynthesis monooxygenase family. Homodimer.

The protein localises to the cytoplasm. The catalysed reaction is heme b + 3 reduced [NADPH--hemoprotein reductase] + 3 O2 = biliverdin IXalpha + CO + Fe(2+) + 3 oxidized [NADPH--hemoprotein reductase] + 3 H2O + H(+). Functionally, allows bacterial pathogens to use the host heme as an iron source. Catalyzes the oxidative degradation of the heme macrocyclic porphyrin ring in the presence of a suitable electron donor such as ascorbate or NADPH--cytochrome P450 reductase, with subsequent release of free iron. The chain is Heme-degrading monooxygenase HmoA (hmoA) from Bacillus subtilis (strain 168).